The sequence spans 302 residues: Urease accessory protein UreD 2 (302 aa).

Belongs to the UreD family. As to quaternary structure, ureD, UreF and UreG form a complex that acts as a GTP-hydrolysis-dependent molecular chaperone, activating the urease apoprotein by helping to assemble the nickel containing metallocenter of UreC. The UreE protein probably delivers the nickel.

The protein localises to the cytoplasm. Its function is as follows. Required for maturation of urease via the functional incorporation of the urease nickel metallocenter. The protein is Urease accessory protein UreD 2 of Brucella canis (strain ATCC 23365 / NCTC 10854 / RM-666).